A 518-amino-acid chain; its full sequence is Cyclin-L2 (518 aa).

2 cyclin-like regions span residues glutamate 81–lysine 183 and lysine 196–glutamine 280. Residues alanine 310–arginine 518 are disordered. Phosphoserine is present on residues serine 328, serine 335, serine 345, serine 348, and serine 366. Positions arginine 382 to serine 420 are RS. Residues serine 405–arginine 427 show a composition bias toward low complexity. The span at serine 438–lysine 450 shows a compositional bias: basic and acidic residues. Positions lysine 455–serine 469 are enriched in basic residues. Basic and acidic residues-rich tracts occupy residues arginine 470–glycine 479 and tyrosine 487–glycine 512.

This sequence belongs to the cyclin family. Cyclin L subfamily. In terms of assembly, interacts with CDK11A, CDK11B, CDK12, CDK13 and POLR2A, the hyperphosphorylated C-terminal domain (CTD) of RNA polymerase II. May form a ternary complex with CDK11B and casein kinase II (CKII). Interacts with pre-mRNA-splicing factors, including at least SRSF1, SRSF2 and SRSF7/SLU7. As to expression, widely expressed (at protein level).

Its subcellular location is the nucleus speckle. It is found in the nucleus. The protein localises to the nucleoplasm. Functionally, involved in pre-mRNA splicing. May induce cell death, possibly by acting on the transcription and RNA processing of apoptosis-related factors. The sequence is that of Cyclin-L2 (Ccnl2) from Mus musculus (Mouse).